Here is a 295-residue protein sequence, read N- to C-terminus: Acetylglutamate kinase (295 aa).

Residues 61 to 62, Arg83, and Asn187 contribute to the substrate site; that span reads GG.

This sequence belongs to the acetylglutamate kinase family. ArgB subfamily.

Its subcellular location is the cytoplasm. The catalysed reaction is N-acetyl-L-glutamate + ATP = N-acetyl-L-glutamyl 5-phosphate + ADP. Its pathway is amino-acid biosynthesis; L-arginine biosynthesis; N(2)-acetyl-L-ornithine from L-glutamate: step 2/4. Catalyzes the ATP-dependent phosphorylation of N-acetyl-L-glutamate. In Methanocorpusculum labreanum (strain ATCC 43576 / DSM 4855 / Z), this protein is Acetylglutamate kinase.